We begin with the raw amino-acid sequence, 597 residues long: Electron transfer flavoprotein-ubiquinone oxidoreductase, mitochondrial (597 aa).

53–67 (VVIVGGGPSGLSAAI) is an FAD binding site. An intramembrane segment occupies 91–112 (IGGHTLSGAVIETRALDELIPN). 2 residues coordinate a ubiquinone: G285 and G286. Residues 409 to 426 (IDPATYDKNIRDTYVVKE) lie within the membrane without spanning it. Residues C540, C566, C569, and C572 each contribute to the [4Fe-4S] cluster site. The 4Fe-4S ferredoxin-type domain occupies 557–586 (KRLQINAQNCIHCKTCDIKDPQQNINWVTP).

This sequence belongs to the ETF-QO/FixC family. As to quaternary structure, monomer. It depends on [4Fe-4S] cluster as a cofactor. FAD serves as cofactor.

It localises to the mitochondrion inner membrane. The enzyme catalyses a ubiquinone + reduced [electron-transfer flavoprotein] = a ubiquinol + oxidized [electron-transfer flavoprotein] + H(+). Its function is as follows. Accepts electrons from ETF and reduces ubiquinone. The chain is Electron transfer flavoprotein-ubiquinone oxidoreductase, mitochondrial (let-721) from Caenorhabditis elegans.